The following is a 399-amino-acid chain: Paraneoplastic antigen-like protein 6A (399 aa).

This sequence belongs to the PNMA family. In terms of tissue distribution, expressed in the brain.

The protein is Paraneoplastic antigen-like protein 6A of Homo sapiens (Human).